The primary structure comprises 621 residues: ATP-dependent DNA helicase Q1 (621 aa).

The Helicase ATP-binding domain occupies 100-275; the sequence is VNATMARKDI…QKILCVEKCL (176 aa). Residue 113 to 120 participates in ATP binding; the sequence is MPTGGGKS. A DEVH box motif is present at residues 219 to 222; that stretch reads DEVH. The Helicase C-terminal domain maps to 296–451; sequence SAEDFIENIA…EMVSYCQNIS (156 aa). Cys453, Cys471, Cys475, and Cys478 together coordinate Zn(2+). An N6-acetyllysine mark is found at Lys514 and Lys522. Phosphoserine occurs at positions 597 and 602.

It belongs to the helicase family. RecQ subfamily. In terms of assembly, may form homodimers or higher order oligomers. Interacts with EXO1. Interacts with MLH1. Interacts with PARP1. Requires Mg(2+) as cofactor. Mn(2+) is required as a cofactor. Zn(2+) serves as cofactor.

It localises to the nucleus. The enzyme catalyses Couples ATP hydrolysis with the unwinding of duplex DNA by translocating in the 3'-5' direction.. It carries out the reaction ATP + H2O = ADP + phosphate + H(+). The catalysed reaction is dATP + H2O = dADP + phosphate + H(+). Functionally, DNA helicase that plays a role in DNA damage repair and genome stability. Exhibits a magnesium- and ATP-dependent DNA-helicase activity that unwinds single- and double-stranded DNA in a 3'-5' direction. Plays a role in restoring regressed replication forks. Required to restart stalled replication forks induced by abortive topoisomerase 1 and 2 lesions. May play a role in the repair of DNA that is damaged by ultraviolet light or other mutagens. The polypeptide is ATP-dependent DNA helicase Q1 (Recql) (Rattus norvegicus (Rat)).